Here is a 205-residue protein sequence, read N- to C-terminus: Meiotic nuclear division protein 1 homolog (205 aa).

An N-acetylserine modification is found at Ser2. Residues 84–173 (HKLEVLESQL…EAANRWTDNI (90 aa)) are a coiled coil.

It belongs to the MND1 family. As to quaternary structure, heterodimer with PSMC3IP/HOP2. MND1-PSMC3IP interacts with DMC1 and RAD51 and binds preferentially to dsDNA.

Its subcellular location is the nucleus. Functionally, required for proper homologous chromosome pairing and efficient cross-over and intragenic recombination during meiosis. Stimulates both DMC1- and RAD51-mediated homologous strand assimilation, which is required for the resolution of meiotic double-strand breaks. The chain is Meiotic nuclear division protein 1 homolog from Homo sapiens (Human).